A 263-amino-acid polypeptide reads, in one-letter code: Undecaprenyl-diphosphatase 2 (263 aa).

A run of 8 helical transmembrane segments spans residues 15-37, 42-62, 83-103, 106-126, 142-162, 183-203, 216-236, and 242-262; these read GLTE…LLGF, AKVF…VIFW, LHII…HSAI, VLFG…LMIV, ITYK…WPGF, AEYT…LDLI, LFAT…VSFL, and VKLT…YFFI.

Belongs to the UppP family.

It is found in the cell membrane. The enzyme catalyses di-trans,octa-cis-undecaprenyl diphosphate + H2O = di-trans,octa-cis-undecaprenyl phosphate + phosphate + H(+). Catalyzes the dephosphorylation of undecaprenyl diphosphate (UPP). Confers resistance to bacitracin. In Bacillus cereus (strain ATCC 10987 / NRS 248), this protein is Undecaprenyl-diphosphatase 2.